Reading from the N-terminus, the 492-residue chain is MNREEFLRLAADGYNRIPLSFETLADFDTPLSIYLKLADAPNSYLLESVQGGEKWGRYSIIGLPCRTVLRVYDHQVRISIDGVETERFDCADPLAFVEEFKARYQVPTVPGLPRFDGGLVGYFGYDCVRYVEKRLATCPNPDPLGNPDILLMVSDAVVVFDNLAGKIHAIVLADPSEENAYERGQARLEELLERLRQPITPRRGLDLEAAQGREPAFRASFTREDYENAVGRIKDYILAGDCMQVVPSQRMSIEFKAAPIDLYRALRCFNPTPYMYFFNFGDFHVVGSSPEVLVRVEDGLVTVRPIAGTRPRGINEEADLALEQDLLSDAKEIAEHLMLIDLGRNDVGRVSDIGAVKVTEKMVIERYSNVMHIVSNVTGQLREGLSAMDALRAILPAGTLSGAPKIRAMEIIDELEPVKRGVYGGAVGYLAWNGNMDTAIAIRTAVIKNGELHVQAGGGIVADSVPALEWEETINKRRAMFRAVALAEQSVE.

L-tryptophan is bound by residues Ser48 and 273–275 (PYM). 308 to 309 (GT) provides a ligand contact to chorismate. Glu335 is a Mg(2+) binding site. Residues Tyr423, Arg443, 457-459 (GGG), and Gly459 each bind chorismate. Mg(2+) is bound at residue Glu472.

Belongs to the anthranilate synthase component I family. As to quaternary structure, heterotetramer consisting of two non-identical subunits: a beta subunit (TrpG) and a large alpha subunit (TrpE). Requires Mg(2+) as cofactor.

It carries out the reaction chorismate + L-glutamine = anthranilate + pyruvate + L-glutamate + H(+). It functions in the pathway amino-acid biosynthesis; L-tryptophan biosynthesis; L-tryptophan from chorismate: step 1/5. Feedback inhibited by tryptophan. In terms of biological role, part of a heterotetrameric complex that catalyzes the two-step biosynthesis of anthranilate, an intermediate in the biosynthesis of L-tryptophan. In the first step, the glutamine-binding beta subunit (TrpG) of anthranilate synthase (AS) provides the glutamine amidotransferase activity which generates ammonia as a substrate that, along with chorismate, is used in the second step, catalyzed by the large alpha subunit of AS (TrpE) to produce anthranilate. In the absence of TrpG, TrpE can synthesize anthranilate directly from chorismate and high concentrations of ammonia. The sequence is that of Anthranilate synthase component 1 from Pseudomonas aeruginosa (strain ATCC 15692 / DSM 22644 / CIP 104116 / JCM 14847 / LMG 12228 / 1C / PRS 101 / PAO1).